A 520-amino-acid polypeptide reads, in one-letter code: Non-specific phospholipase C6 (520 aa).

A signal peptide spans 1 to 31 (MKPSSASRFSLTFSHFLTLYCLLTQTHVAQG).

The protein belongs to the bacterial phospholipase C family. In terms of tissue distribution, expressed in roots, leaves, stems, flowers and siliques.

The protein localises to the secreted. This chain is Non-specific phospholipase C6 (NPC6), found in Arabidopsis thaliana (Mouse-ear cress).